A 144-amino-acid chain; its full sequence is Large ribosomal subunit protein uL15 (144 aa).

The segment at 1-48 is disordered; sequence MQLNNLKPADGSKHAKRRVGRGIGSGLGKTAGRGHKGQKSRSGGFHKV. A compositionally biased stretch (gly residues) spans 21–31; sequence RGIGSGLGKTA.

This sequence belongs to the universal ribosomal protein uL15 family. Part of the 50S ribosomal subunit.

Its function is as follows. Binds to the 23S rRNA. The protein is Large ribosomal subunit protein uL15 of Cupriavidus metallidurans (strain ATCC 43123 / DSM 2839 / NBRC 102507 / CH34) (Ralstonia metallidurans).